Here is a 390-residue protein sequence, read N- to C-terminus: Elongation factor Tu 2 (390 aa).

A tr-type G domain is found at 10–201 (KPHVNVGTIG…LDDYVEVPPR (192 aa)). The segment at 19 to 26 (GHVDHGKT) is G1. Residue 19 to 26 (GHVDHGKT) participates in GTP binding. Threonine 26 contacts Mg(2+). The interval 55-59 (GITIA) is G2. The G3 stretch occupies residues 76-79 (DCPG). GTP contacts are provided by residues 76 to 80 (DCPGH) and 131 to 134 (NKAD). The segment at 131–134 (NKAD) is G4. Residues 168 to 170 (SAL) are G5.

It belongs to the TRAFAC class translation factor GTPase superfamily. Classic translation factor GTPase family. EF-Tu/EF-1A subfamily. In terms of assembly, monomer.

The protein localises to the cytoplasm. The catalysed reaction is GTP + H2O = GDP + phosphate + H(+). In terms of biological role, GTP hydrolase that promotes the GTP-dependent binding of aminoacyl-tRNA to the A-site of ribosomes during protein biosynthesis. This chain is Elongation factor Tu 2, found in Wolbachia sp. subsp. Brugia malayi (strain TRS).